We begin with the raw amino-acid sequence, 225 residues long: MGFGDLKSPAGLQVLNDYLADKSYIEGYVPSQADVAVFEAVSGPPPADLCHALRWYNHIKSYEKEKASLPGIKKALGTYGPADVEDTTGSGATDSKDDDDIDLFGSDDEEESEEAKRLREERLAQYESKKAKKPALVAKSSILLDVKPWDDETDMVKLEECVRSIQADGLVWGSSKLVPVGYGIKKLQIQCVVEDDKVGTDMLEEQITAFEDYVQSMDVAAFNKI.

Positions 2 to 84 (GFGDLKSPAG…ALGTYGPADV (83 aa)) constitute a GST C-terminal domain. An N6-acetyllysine modification is found at lysine 7. Serine 8 and serine 42 each carry phosphoserine. Residues 80–114 (GPADVEDTTGSGATDSKDDDDIDLFGSDDEEESEE) form a disordered region. Phosphothreonine occurs at positions 88 and 93. Position 95 is a phosphoserine (serine 95). Residues 96 to 113 (KDDDDIDLFGSDDEEESE) are compositionally biased toward acidic residues. Serine 106 is subject to Phosphoserine; by CK2. Residue lysine 147 forms a Glycyl lysine isopeptide (Lys-Gly) (interchain with G-Cter in SUMO2) linkage. Residue serine 174 is modified to Phosphoserine.

The protein belongs to the EF-1-beta/EF-1-delta family. EF-1 is composed of 4 subunits: alpha, beta (alpha subunit of the eEF1B subcomplex), delta (beta subunit of the eEF1B subcomplex), and gamma (gamma subunit of the eEF1B subcomplex). Interacts with elongation factor EEF1A1. Post-translationally, phosphorylation affects the GDP/GTP exchange rate.

Catalytic subunit of the guanine nucleotide exchange factor (GEF) (eEF1B subcomplex) of the eukaryotic elongation factor 1 complex (eEF1). Stimulates the exchange of GDP for GTP on elongation factor 1A (eEF1A), probably by displacing GDP from the nucleotide binding pocket in eEF1A. The sequence is that of Elongation factor 1-beta (EEF1B) from Oryctolagus cuniculus (Rabbit).